The sequence spans 226 residues: Large ribosomal subunit protein uL1 (226 aa).

It belongs to the universal ribosomal protein uL1 family. Part of the 50S ribosomal subunit.

Binds directly to 23S rRNA. The L1 stalk is quite mobile in the ribosome, and is involved in E site tRNA release. Its function is as follows. Protein L1 is also a translational repressor protein, it controls the translation of the L11 operon by binding to its mRNA. In Treponema pallidum (strain Nichols), this protein is Large ribosomal subunit protein uL1.